A 289-amino-acid chain; its full sequence is ATP synthase subunit a (289 aa).

The next 6 membrane-spanning stretches (helical) occupy residues 43–63 (AFHLDTLGWSVALGLIFLFIF), 103–123 (VIAPLALTIFVWVFLMNAVDL), 160–180 (FCVFALIIFYSIKVKGLGGFI), 193–213 (IFVQILLIPVNFLLEFVTLIA), 232–252 (VFILIAVMFGSGLLWLSGLGV), and 259–279 (AVFHILIITLQAFIFMMLTIV).

The protein belongs to the ATPase A chain family. As to quaternary structure, F-type ATPases have 2 components, CF(1) - the catalytic core - and CF(0) - the membrane proton channel. CF(1) has five subunits: alpha(3), beta(3), gamma(1), delta(1), epsilon(1). CF(0) has three main subunits: a(1), b(2) and c(9-12). The alpha and beta chains form an alternating ring which encloses part of the gamma chain. CF(1) is attached to CF(0) by a central stalk formed by the gamma and epsilon chains, while a peripheral stalk is formed by the delta and b chains.

Its subcellular location is the cell inner membrane. In terms of biological role, key component of the proton channel; it plays a direct role in the translocation of protons across the membrane. In Pseudomonas putida (strain GB-1), this protein is ATP synthase subunit a.